Consider the following 288-residue polypeptide: DNA repair protein RecO (288 aa).

The protein belongs to the RecO family.

Involved in DNA repair and RecF pathway recombination. The protein is DNA repair protein RecO of Trichodesmium erythraeum (strain IMS101).